The primary structure comprises 306 residues: Protein YIPF1 (306 aa).

The Cytoplasmic portion of the chain corresponds to 1 to 119 (MAAVDDLQFE…VRLYIRSNPD (119 aa)). Residues 30–63 (IEDPSVSFGHQPRPPGSVGREEDEELLGNNDSDE) form a disordered region. The span at 50–63 (EEDEELLGNNDSDE) shows a compositional bias: acidic residues. Residues 120-140 (LYGPFWICATLVFAIAISGNL) form a helical membrane-spanning segment. The Lumenal segment spans residues 141 to 162 (SNFLIHLGEKTYHYVPEFQKVS). The helical transmembrane segment at 163–183 (IAATVIYAYAWLVPLALWGFL) threads the bilayer. Residues 184–200 (LWRNSKVMSMVSYSFLE) are Cytoplasmic-facing. Residues 201–221 (IVCVYGYSLFIYIPTAVLWII) form a helical membrane-spanning segment. Over 222–227 (PQRVVR) the chain is Lumenal. Residues 228–248 (WVLVMIALGVSGSVLVMTFWP) form a helical membrane-spanning segment. Residues 249-256 (AVREDNRR) lie on the Cytoplasmic side of the membrane. A helical membrane pass occupies residues 257-277 (VALATIVTIVLLHVLLSVGCL). Residues 278–306 (AYFFDAPEMDHLPAAITTPNQTVTAAKSS) lie on the Lumenal side of the membrane. N297 carries an N-linked (GlcNAc...) asparagine glycan.

It belongs to the YIP1 family. In terms of assembly, interacts with YIPF6; this interaction may stabilize YIPF1. May also form a ternary complex with YIPF2 and YIPF6.

It localises to the golgi apparatus. The protein resides in the cis-Golgi network membrane. It is found in the trans-Golgi network membrane. Its subcellular location is the late endosome membrane. The protein is Protein YIPF1 (Yipf1) of Mus musculus (Mouse).